The following is a 369-amino-acid chain: Ubiquinone biosynthesis O-methyltransferase, mitochondrial (369 aa).

The transit peptide at 1–85 (MWSGRKLGSS…SFRYPWARLY (85 aa)) directs the protein to the mitochondrion. R124 serves as a coordination point for S-adenosyl-L-methionine. N6-acetyllysine occurs at positions 143 and 149. S-adenosyl-L-methionine is bound by residues G154 and D175. Position 196 is an N6-acetyllysine (K196). An S-adenosyl-L-methionine-binding site is contributed by S222. The Mg(2+) site is built by E223, E226, and H227.

The protein belongs to the class I-like SAM-binding methyltransferase superfamily. UbiG/COQ3 family. As to quaternary structure, component of a multi-subunit COQ enzyme complex, composed of at least COQ3, COQ4, COQ5, COQ6, COQ7 and COQ9. The cofactor is Mg(2+).

It is found in the mitochondrion inner membrane. The catalysed reaction is 3,4-dihydroxy-5-(all-trans-decaprenyl)benzoate + S-adenosyl-L-methionine = 4-hydroxy-3-methoxy-5-(all-trans-decaprenyl)benzoate + S-adenosyl-L-homocysteine + H(+). It catalyses the reaction a 3-demethylubiquinone + S-adenosyl-L-methionine = a ubiquinone + S-adenosyl-L-homocysteine. The enzyme catalyses 3-demethylubiquinol-10 + S-adenosyl-L-methionine = ubiquinol-10 + S-adenosyl-L-homocysteine + H(+). The protein operates within cofactor biosynthesis; ubiquinone biosynthesis. Its function is as follows. O-methyltransferase required for two non-consecutive steps during ubiquinone biosynthesis. Catalyzes the 2 O-methylation of 3,4-dihydroxy-5-(all-trans-decaprenyl)benzoic acid into 4-hydroxy-3-methoxy-5-(all-trans-decaprenyl)benzoic acid. Also catalyzes the last step of ubiquinone biosynthesis by mediating methylation of 3-demethylubiquinone into ubiquinone. Also able to mediate the methylation of 3-demethylubiquinol-10 into ubiquinol-10. This chain is Ubiquinone biosynthesis O-methyltransferase, mitochondrial, found in Homo sapiens (Human).